A 426-amino-acid chain; its full sequence is DNA primase DnaG (426 aa).

Residues 171–245 (DTVILVEGRA…KVDFVARAPP (75 aa)) enclose the Toprim domain. Residues E177, D219, and D221 each coordinate Mg(2+). A disordered region spans residues 407–426 (KSEENIQESVSTGESAQTSP). Residues 413–426 (QESVSTGESAQTSP) show a composition bias toward polar residues.

It belongs to the archaeal DnaG primase family. As to quaternary structure, forms a ternary complex with MCM helicase and DNA. Component of the archaeal exosome complex. It depends on Mg(2+) as a cofactor.

It catalyses the reaction ssDNA + n NTP = ssDNA/pppN(pN)n-1 hybrid + (n-1) diphosphate.. RNA polymerase that catalyzes the synthesis of short RNA molecules used as primers for DNA polymerase during DNA replication. Also part of the exosome, which is a complex involved in RNA degradation. Acts as a poly(A)-binding protein that enhances the interaction between heteromeric, adenine-rich transcripts and the exosome. The sequence is that of DNA primase DnaG from Thermofilum pendens (strain DSM 2475 / Hrk 5).